Consider the following 231-residue polypeptide: Uracil-DNA glycosylase (231 aa).

Asp-74 serves as the catalytic Proton acceptor.

Belongs to the uracil-DNA glycosylase (UDG) superfamily. UNG family.

It is found in the cytoplasm. The catalysed reaction is Hydrolyzes single-stranded DNA or mismatched double-stranded DNA and polynucleotides, releasing free uracil.. Functionally, excises uracil residues from the DNA which can arise as a result of misincorporation of dUMP residues by DNA polymerase or due to deamination of cytosine. This is Uracil-DNA glycosylase from Campylobacter jejuni (strain RM1221).